A 392-amino-acid polypeptide reads, in one-letter code: Leucine-rich repeat-containing protein 74B (392 aa).

The tract at residues 24-46 (RLSGVPEAEQGPEANWDSDLETE) is disordered. 9 LRR repeats span residues 106–129 (NPYVKRLDLRDNGLCGAGAEALAG), 134–157 (SSSIHDVDLSENQLGVAGAQALCA), 162–185 (NQAMRKMQLSGNGLEEQAAQHLAE), 192–213 (DLKSLDLSYNQLNDQAGETLGP), 220–241 (GLTELNVSWNHLRGPGAVAFAR), 248–269 (FLKVLDISYNGFGDPGASAVGE), 276–297 (VLEELNMSNNRISAMGALSLGL), 304–325 (TLRILVVSRNPMRSEGCFGLLK), and 334–356 (ALELLDFSDIQVNAEFDGLASSV).

The polypeptide is Leucine-rich repeat-containing protein 74B (Homo sapiens (Human)).